A 129-amino-acid chain; its full sequence is 3-aminoacrylate deaminase RutC (129 aa).

The protein belongs to the RutC family.

The catalysed reaction is (Z)-3-aminoacrylate + H2O + H(+) = 3-oxopropanoate + NH4(+). In terms of biological role, involved in pyrimidine catabolism. Catalyzes the deamination of 3-aminoacrylate to malonic semialdehyde, a reaction that can also occur spontaneously. RutC may facilitate the reaction and modulate the metabolic fitness, rather than catalyzing essential functions. This chain is 3-aminoacrylate deaminase RutC, found in Caulobacter sp. (strain K31).